The chain runs to 111 residues: Thiosulfate sulfurtransferase GlpE (111 aa).

Positions 16–104 (QTENAVLLDV…WQRAGLPMET (89 aa)) constitute a Rhodanese domain. Cys64 functions as the Cysteine persulfide intermediate in the catalytic mechanism.

This sequence belongs to the GlpE family.

The protein localises to the cytoplasm. The catalysed reaction is thiosulfate + hydrogen cyanide = thiocyanate + sulfite + 2 H(+). It catalyses the reaction thiosulfate + [thioredoxin]-dithiol = [thioredoxin]-disulfide + hydrogen sulfide + sulfite + 2 H(+). Its function is as follows. Transferase that catalyzes the transfer of sulfur from thiosulfate to thiophilic acceptors such as cyanide or dithiols. May function in a CysM-independent thiosulfate assimilation pathway by catalyzing the conversion of thiosulfate to sulfite, which can then be used for L-cysteine biosynthesis. The polypeptide is Thiosulfate sulfurtransferase GlpE (Actinobacillus succinogenes (strain ATCC 55618 / DSM 22257 / CCUG 43843 / 130Z)).